The chain runs to 62 residues: Dual specificity mitogen-activated protein kinase kinase 3 (62 aa).

Positions 1 to 62 constitute a Protein kinase domain; it reads GKIAVSIVKA…VAKTMDAGCK (62 aa).

The protein belongs to the protein kinase superfamily. STE Ser/Thr protein kinase family. MAP kinase kinase subfamily. In terms of processing, activated by phosphorylation on Ser/Thr catalyzed by MAP kinase kinase kinases.

It catalyses the reaction L-seryl-[protein] + ATP = O-phospho-L-seryl-[protein] + ADP + H(+). The catalysed reaction is L-threonyl-[protein] + ATP = O-phospho-L-threonyl-[protein] + ADP + H(+). The enzyme catalyses L-tyrosyl-[protein] + ATP = O-phospho-L-tyrosyl-[protein] + ADP + H(+). Catalyzes the concomitant phosphorylation of a threonine and a tyrosine residue in a Thr-Glu-Tyr sequence located in MAP kinases. The protein is Dual specificity mitogen-activated protein kinase kinase 3 (map2k3) of Xenopus laevis (African clawed frog).